Here is a 139-residue protein sequence, read N- to C-terminus: Stress-related protein 1 (139 aa).

The segment covering 1 to 12 (MTSESSTPTGST) has biased composition (polar residues). Positions 1–86 (MTSESSTPTG…AERPGSATTP (86 aa)) are disordered. Composition is skewed to low complexity over residues 14–53 (ALPA…SLVV) and 60–74 (SPVV…TRPR). Phosphoserine is present on serine 60.

In terms of tissue distribution, embryo.

Involved in drought, heat, cold, and/or salt tolerance. The polypeptide is Stress-related protein 1 (SRP1) (Zea mays (Maize)).